The following is a 273-amino-acid chain: uncharacterized protein (273 aa).

This sequence belongs to the AtsA family.

This is an uncharacterized protein from Mycobacterium tuberculosis (strain CDC 1551 / Oshkosh).